The primary structure comprises 358 residues: Histidinol-phosphate aminotransferase (358 aa).

At K218 the chain carries N6-(pyridoxal phosphate)lysine.

The protein belongs to the class-II pyridoxal-phosphate-dependent aminotransferase family. Histidinol-phosphate aminotransferase subfamily. As to quaternary structure, homodimer. It depends on pyridoxal 5'-phosphate as a cofactor.

It catalyses the reaction L-histidinol phosphate + 2-oxoglutarate = 3-(imidazol-4-yl)-2-oxopropyl phosphate + L-glutamate. Its pathway is amino-acid biosynthesis; L-histidine biosynthesis; L-histidine from 5-phospho-alpha-D-ribose 1-diphosphate: step 7/9. This chain is Histidinol-phosphate aminotransferase, found in Dehalococcoides mccartyi (strain CBDB1).